Reading from the N-terminus, the 312-residue chain is 4-hydroxyphenylacetate decarboxylase activating enzyme (312 aa).

Residues His16–Asp299 form the Radical SAM core domain. [4Fe-4S] cluster-binding residues include Cys30, Cys34, Cys37, Cys56, Cys62, Cys65, and Cys101. Position 36 to 38 (Trp36 to Ala38) interacts with S-adenosyl-L-methionine. 4Fe-4S ferredoxin-type domains are found at residues Lys47–Asp79 and Gly80–Glu112. S-adenosyl-L-methionine contacts are provided by residues Gly140, Asp189–Lys191, and His263.

The protein belongs to the organic radical-activating enzymes family. As to quaternary structure, monomer. It depends on [4Fe-4S] cluster as a cofactor.

The catalysed reaction is glycyl-[protein] + reduced [flavodoxin] + S-adenosyl-L-methionine = glycin-2-yl radical-[protein] + semiquinone [flavodoxin] + 5'-deoxyadenosine + L-methionine + H(+). Functionally, catalyzes activation of 4-hydroxyphenylacetate decarboxylase under anaerobic conditions by generation of an organic free radical on a glycine residue, via a homolytic cleavage of S-adenosyl-L-methionine (SAM). This is 4-hydroxyphenylacetate decarboxylase activating enzyme from Clostridium scatologenes.